Reading from the N-terminus, the 346-residue chain is Structure-specific endonuclease subunit SLX1 (346 aa).

A GIY-YIG domain is found at 22 to 105 (DFYGVYLLRS…QHPYQTRHIK (84 aa)). Residues 216-306 (CFICNETIDY…TPLQGKCLSC (91 aa)) form an SLX1-type zinc finger.

The protein belongs to the SLX1 family. As to quaternary structure, forms a heterodimer with SLX4. A divalent metal cation is required as a cofactor.

The protein localises to the nucleus. Functionally, catalytic subunit of the SLX1-SLX4 structure-specific endonuclease that resolves DNA secondary structures generated during DNA repair and recombination. Has endonuclease activity towards branched DNA substrates, introducing single-strand cuts in duplex DNA close to junctions with ss-DNA. The sequence is that of Structure-specific endonuclease subunit SLX1 from Debaryomyces hansenii (strain ATCC 36239 / CBS 767 / BCRC 21394 / JCM 1990 / NBRC 0083 / IGC 2968) (Yeast).